The sequence spans 270 residues: Probable septum site-determining protein MinC (270 aa).

It belongs to the MinC family. In terms of assembly, interacts with MinD and FtsZ.

In terms of biological role, cell division inhibitor that blocks the formation of polar Z ring septums. Rapidly oscillates between the poles of the cell to destabilize FtsZ filaments that have formed before they mature into polar Z rings. Prevents FtsZ polymerization. In Cupriavidus necator (strain ATCC 17699 / DSM 428 / KCTC 22496 / NCIMB 10442 / H16 / Stanier 337) (Ralstonia eutropha), this protein is Probable septum site-determining protein MinC.